A 265-amino-acid chain; its full sequence is tRNA pseudouridine synthase A (265 aa).

Residue Asp53 is the Nucleophile of the active site. Residue Tyr111 participates in substrate binding.

This sequence belongs to the tRNA pseudouridine synthase TruA family. Homodimer.

The catalysed reaction is uridine(38/39/40) in tRNA = pseudouridine(38/39/40) in tRNA. Functionally, formation of pseudouridine at positions 38, 39 and 40 in the anticodon stem and loop of transfer RNAs. The protein is tRNA pseudouridine synthase A of Acinetobacter baumannii (strain AB307-0294).